Here is a 585-residue protein sequence, read N- to C-terminus: Protein DENND6B (585 aa).

The uDENN domain maps to 43–214 (ECVCVVTFDL…LPVMGVVVQV (172 aa)). One can recognise a cDENN domain in the interval 246–373 (VHELDLFRCF…VKLKKPSRLK (128 aa)). Residues 375–499 (LDTKPGLYTA…KSPHFDGWYR (125 aa)) enclose the dDENN domain.

This sequence belongs to the DENND6 family.

The protein localises to the recycling endosome. It is found in the cytoplasm. Its function is as follows. Guanine nucleotide exchange factor (GEF) for RAB14. Also has some, lesser GEF activity towards RAB35. The chain is Protein DENND6B (DENND6B) from Homo sapiens (Human).